The primary structure comprises 298 residues: tRNA (guanine(9)-N1)-methyltransferase (298 aa).

A compositionally biased stretch (polar residues) spans 1-10; it reads MSDTSENSNA. Residues 1-44 form a disordered region; the sequence is MSDTSENSNAEIPADTSDVKDKPKPIVRAPQFPPPPEGISKSQW. An SAM-dependent MTase TRM10-type domain is found at 96 to 285; it reads PPKVNLNQSD…SVLPPRKLEV (190 aa). S-adenosyl-L-methionine-binding positions include 192–193, Gly-212, 216–220, Cys-224, Leu-238, and 250–252; these read LT, DKNRH, and KVL. Asp-216 serves as the catalytic Proton acceptor.

Belongs to the class IV-like SAM-binding methyltransferase superfamily. TRM10 family. As to quaternary structure, monomer.

It is found in the cytoplasm. Its subcellular location is the nucleus. It catalyses the reaction guanosine(9) in tRNA + S-adenosyl-L-methionine = N(1)-methylguanosine(9) in tRNA + S-adenosyl-L-homocysteine + H(+). In terms of biological role, S-adenosyl-L-methionine-dependent guanine N(1)-methyltransferase that catalyzes the formation of N(1)-methylguanine at position 9 (m1G9) in cytoplasmic tRNA. The polypeptide is tRNA (guanine(9)-N1)-methyltransferase (Kluyveromyces lactis (strain ATCC 8585 / CBS 2359 / DSM 70799 / NBRC 1267 / NRRL Y-1140 / WM37) (Yeast)).